The sequence spans 294 residues: MGQKIHPTGFRLAVSRNWASRWYADNRDFAGMLAEDIKVREYLKTKLKNAAVSRILIERPAKNARITIYSARPGVVIGKKGEDIESLKKELAVRLGVPVAVNIEEVRKPEIDAKLIADSITQQLEKRIMFRRAMKRAMQNAMRLGAQGIKIMSSGRLNGIEIARCEWYREGRVPLHTLRADIDYGTSEAKTTYGVIGVKVWVYKGDTLGRNDLPAVETPRPDEERRPRGPRRDGRPGGDRSGAGRGPRRPAAGNSAPADGSDKPAGAGGADNTAVKRVRKVAAPAAPAADVKGE.

The KH type-2 domain maps to 39–107 (VREYLKTKLK…PVAVNIEEVR (69 aa)). A disordered region spans residues 210-294 (RNDLPAVETP…AAPAADVKGE (85 aa)). The segment covering 219–238 (PRPDEERRPRGPRRDGRPGG) has biased composition (basic and acidic residues). Low complexity-rich tracts occupy residues 249 to 258 (RPAAGNSAPA) and 281 to 294 (VAAP…VKGE).

The protein belongs to the universal ribosomal protein uS3 family. In terms of assembly, part of the 30S ribosomal subunit. Forms a tight complex with proteins S10 and S14.

In terms of biological role, binds the lower part of the 30S subunit head. Binds mRNA in the 70S ribosome, positioning it for translation. The protein is Small ribosomal subunit protein uS3 of Verminephrobacter eiseniae (strain EF01-2).